The following is a 436-amino-acid chain: Zinc finger protein 101 (436 aa).

The KRAB domain maps to 4 to 82 (VAFEDVAVNF…RKEGNEHRET (79 aa)). The segment at 102–124 (CKCSVCGKVFLRHSFLDRHMRAH) adopts a C2H2-type 1 zinc-finger fold. Over residues 128–141 (KRSECGGEWRETPR) the composition is skewed to basic and acidic residues. Residues 128–164 (KRSECGGEWRETPRKQKQHGKASISPSSGARRTVTPT) are disordered. The segment covering 151–163 (ISPSSGARRTVTP) has biased composition (polar residues). The segment at 169–191 (YECKVCGKAFNSPNLFQIHQRTH) adopts a C2H2-type 2 zinc-finger fold. The C2H2-type 3; degenerate zinc finger occupies 197–219 (YKCREIVRAFTVSSFFRKHGKMH). 7 C2H2-type zinc fingers span residues 225–247 (YECK…VRTH), 253–276 (YKCK…IRSH), 282–304 (HQCQ…ERTH), 310–332 (YECQ…ERAH), 338–360 (YECN…KKTH), 366–388 (YECT…EMTH), and 394–416 (FDCK…ERTH).

This sequence belongs to the krueppel C2H2-type zinc-finger protein family. Expressed in a variety of adult and fetal tissues.

It is found in the nucleus. Functionally, may be involved in transcriptional regulation. This chain is Zinc finger protein 101 (ZNF101), found in Homo sapiens (Human).